The chain runs to 34 residues: Brevinin-2Rf (34 aa).

C28 and C34 form a disulfide bridge.

In terms of tissue distribution, expressed by the skin glands.

Its subcellular location is the secreted. In terms of biological role, antimicrobial peptide. In Pelophylax ridibundus (Marsh frog), this protein is Brevinin-2Rf.